Consider the following 309-residue polypeptide: Ankyrin repeat protein VACWR203 (309 aa).

5 ANK repeats span residues 13–44 (SVFK…SLTI), 110–142 (KYGT…DINA), 160–189 (FVYH…DLTI), 197–231 (PVVY…RASH), and 269–298 (EGRT…DIVV).

The protein belongs to the orthopoxviruses VACWR203 protein family.

This is Ankyrin repeat protein VACWR203 from Bos taurus (Bovine).